The following is a 370-amino-acid chain: Aminomethyltransferase (370 aa).

This sequence belongs to the GcvT family. The glycine cleavage system is composed of four proteins: P, T, L and H.

The catalysed reaction is N(6)-[(R)-S(8)-aminomethyldihydrolipoyl]-L-lysyl-[protein] + (6S)-5,6,7,8-tetrahydrofolate = N(6)-[(R)-dihydrolipoyl]-L-lysyl-[protein] + (6R)-5,10-methylene-5,6,7,8-tetrahydrofolate + NH4(+). The glycine cleavage system catalyzes the degradation of glycine. The polypeptide is Aminomethyltransferase (Leptospira biflexa serovar Patoc (strain Patoc 1 / Ames)).